The sequence spans 1022 residues: Protein trachealess (1022 aa).

Residues 86–139 (LRKEKSRDAARSRRGKENYEFYELAKMLPLPAAITSQLDKASIIRLTISYLKLR) form the bHLH domain. The 71-residue stretch at 174–244 (EQHQGTHILQ…DQLGLSLTSG (71 aa)) folds into the PAS 1 domain. Positions 239 to 289 (LSLTSGGGGGGGSSSSGGGGGGAGGGMASPTSGASDDGSGTHGTNNPDVAA) are disordered. The segment covering 243–265 (SGGGGGGGSSSSGGGGGGAGGGM) has biased composition (gly residues). A compositionally biased stretch (polar residues) spans 280 to 289 (HGTNNPDVAA). Residues 391–461 (PPPSVHEIRL…KSHSDLIEKG (71 aa)) form the PAS 2 domain. The region spanning 465–508 (TGYYRLMNKSGGYTWLQTCATVVCSTKNADEQNIICVNYVISNR) is the PAC domain. Disordered regions lie at residues 525–686 (DSIK…ADSA), 849–896 (AMTP…GDVV), and 962–996 (DDQGQVPPSCQDQYHHHHHHHHHQDGSAGSSASQA). Low complexity-rich tracts occupy residues 578 to 587 (RSAAASHGSS) and 611 to 625 (PTTVATPVPAATPPV). Residues 629 to 636 (KRKRKTKA) carry the Nuclear localization signal motif. Serine 673 is modified (phosphoserine; by PKB/Akt1). Positions 851–864 (TPPSSVSPRDSNQP) are enriched in polar residues. Positions 987–996 (GSAGSSASQA) are enriched in low complexity.

Efficient DNA binding requires dimerization with another bHLH protein. Heterodimer with tgo. Ser-673 phosphorylation by PKB/Akt1 is required for nuclear targeting and transcriptional activity. In terms of tissue distribution, trachea, salivary gland ducts, posterior spiracles (Filzkoeper primordia) and a subset of cells in the CNS.

The protein resides in the nucleus. In terms of biological role, transcription factor, master regulator of tracheal cell fates in the embryo, necessary for the development of the salivary gland duct, Malpighian tubules and the posterior spiracles. It may induce a general fate of branched tubular structures of epithelial origin. Functions with tgo to regulate expression of btl. The chain is Protein trachealess (trh) from Drosophila melanogaster (Fruit fly).